A 247-amino-acid polypeptide reads, in one-letter code: Large ribosomal subunit protein uL30 (247 aa).

Belongs to the universal ribosomal protein uL30 family.

In Sus scrofa (Pig), this protein is Large ribosomal subunit protein uL30 (RPL7L1).